Reading from the N-terminus, the 561-residue chain is Sesquiterpene synthase 1 (561 aa).

Mg(2+) is bound by residues aspartate 313, aspartate 317, aspartate 458, and glutamate 466. The short motif at 313-317 (DDIYD) is the DDXXD motif element.

Belongs to the terpene synthase family. Tpsa subfamily. The cofactor is Mn(2+). Mg(2+) is required as a cofactor.

It localises to the cytoplasm. It carries out the reaction (2E,6E)-farnesyl diphosphate = (1S,8aR)-delta-cadinene + diphosphate. Its pathway is secondary metabolite biosynthesis; terpenoid biosynthesis. In terms of biological role, involved in the biosynthesis of delta-cadinene. The polypeptide is Sesquiterpene synthase 1 (STS1) (Thapsia garganica (Deadly carrot)).